The sequence spans 366 residues: 3-dehydroquinate synthase (366 aa).

NAD(+) contacts are provided by residues 75-80 (DGEEYK), 109-113 (GVVGD), 133-134 (TT), lysine 146, lysine 155, and 173-176 (TLDT). 3 residues coordinate Zn(2+): glutamate 188, histidine 251, and histidine 268.

This sequence belongs to the sugar phosphate cyclases superfamily. Dehydroquinate synthase family. Co(2+) is required as a cofactor. It depends on Zn(2+) as a cofactor. Requires NAD(+) as cofactor.

The protein resides in the cytoplasm. The enzyme catalyses 7-phospho-2-dehydro-3-deoxy-D-arabino-heptonate = 3-dehydroquinate + phosphate. It functions in the pathway metabolic intermediate biosynthesis; chorismate biosynthesis; chorismate from D-erythrose 4-phosphate and phosphoenolpyruvate: step 2/7. Its function is as follows. Catalyzes the conversion of 3-deoxy-D-arabino-heptulosonate 7-phosphate (DAHP) to dehydroquinate (DHQ). The sequence is that of 3-dehydroquinate synthase from Nitrosospira multiformis (strain ATCC 25196 / NCIMB 11849 / C 71).